Consider the following 196-residue polypeptide: Imidazoleglycerol-phosphate dehydratase (196 aa).

This sequence belongs to the imidazoleglycerol-phosphate dehydratase family.

The protein resides in the cytoplasm. It carries out the reaction D-erythro-1-(imidazol-4-yl)glycerol 3-phosphate = 3-(imidazol-4-yl)-2-oxopropyl phosphate + H2O. Its pathway is amino-acid biosynthesis; L-histidine biosynthesis; L-histidine from 5-phospho-alpha-D-ribose 1-diphosphate: step 6/9. The chain is Imidazoleglycerol-phosphate dehydratase from Akkermansia muciniphila (strain ATCC BAA-835 / DSM 22959 / JCM 33894 / BCRC 81048 / CCUG 64013 / CIP 107961 / Muc).